Consider the following 921-residue polypeptide: Isoleucine--tRNA ligase (921 aa).

The short motif at 57–67 is the 'HIGH' region element; the sequence is PYANGELHMGH. Glu-552 contacts L-isoleucyl-5'-AMP. The 'KMSKS' region signature appears at 593–597; sequence KMSKS. Lys-596 serves as a coordination point for ATP. The Zn(2+) site is built by Cys-888, Cys-891, Cys-908, and Cys-911.

Belongs to the class-I aminoacyl-tRNA synthetase family. IleS type 1 subfamily. As to quaternary structure, monomer. It depends on Zn(2+) as a cofactor.

Its subcellular location is the cytoplasm. It catalyses the reaction tRNA(Ile) + L-isoleucine + ATP = L-isoleucyl-tRNA(Ile) + AMP + diphosphate. Its function is as follows. Catalyzes the attachment of isoleucine to tRNA(Ile). As IleRS can inadvertently accommodate and process structurally similar amino acids such as valine, to avoid such errors it has two additional distinct tRNA(Ile)-dependent editing activities. One activity is designated as 'pretransfer' editing and involves the hydrolysis of activated Val-AMP. The other activity is designated 'posttransfer' editing and involves deacylation of mischarged Val-tRNA(Ile). In Listeria welshimeri serovar 6b (strain ATCC 35897 / DSM 20650 / CCUG 15529 / CIP 8149 / NCTC 11857 / SLCC 5334 / V8), this protein is Isoleucine--tRNA ligase.